A 332-amino-acid polypeptide reads, in one-letter code: Probable allantoicase (332 aa).

This sequence belongs to the allantoicase family.

It carries out the reaction allantoate + H2O = (S)-ureidoglycolate + urea. It participates in nitrogen metabolism; (S)-allantoin degradation; (S)-ureidoglycolate from allantoate (aminidohydrolase route): step 1/1. The polypeptide is Probable allantoicase (Pseudomonas aeruginosa (strain LESB58)).